Reading from the N-terminus, the 360-residue chain is Photosystem II protein D1 (360 aa).

3 helical membrane-spanning segments follow: residues 29–46 (YIGW…TATS), 118–133 (HFLT…EWEL), and 142–156 (WISV…AAAA). H118 lines the chlorophyll a pocket. Y126 contributes to the pheophytin a binding site. 2 residues coordinate [CaMn4O5] cluster: D170 and E189. The helical transmembrane segment at 197–218 (FHQLGVAGVFGGSLFSAMHGSL) threads the bilayer. H198 provides a ligand contact to chlorophyll a. A quinone is bound by residues H215 and 264-265 (SF). H215 serves as a coordination point for Fe cation. Position 272 (H272) interacts with Fe cation. Residues 274–288 (FLGLWPVVGIWLTAL) form a helical membrane-spanning segment. Residues H332, E333, D342, and A344 each contribute to the [CaMn4O5] cluster site. The propeptide occupies 345 to 360 (SGESLPVALTAPAVNG).

It belongs to the reaction center PufL/M/PsbA/D family. As to quaternary structure, PSII is composed of 1 copy each of membrane proteins PsbA, PsbB, PsbC, PsbD, PsbE, PsbF, PsbH, PsbI, PsbJ, PsbK, PsbL, PsbM, PsbT, PsbX, PsbY, PsbZ, Psb30/Ycf12, at least 3 peripheral proteins of the oxygen-evolving complex and a large number of cofactors. It forms dimeric complexes. The cofactor is The D1/D2 heterodimer binds P680, chlorophylls that are the primary electron donor of PSII, and subsequent electron acceptors. It shares a non-heme iron and each subunit binds pheophytin, quinone, additional chlorophylls, carotenoids and lipids. D1 provides most of the ligands for the Mn4-Ca-O5 cluster of the oxygen-evolving complex (OEC). There is also a Cl(-1) ion associated with D1 and D2, which is required for oxygen evolution. The PSII complex binds additional chlorophylls, carotenoids and specific lipids.. Post-translationally, tyr-161 forms a radical intermediate that is referred to as redox-active TyrZ, YZ or Y-Z. In terms of processing, C-terminally processed by CTPA; processing is essential to allow assembly of the oxygen-evolving complex and thus photosynthetic growth.

It is found in the plastid. The protein resides in the chloroplast thylakoid membrane. The catalysed reaction is 2 a plastoquinone + 4 hnu + 2 H2O = 2 a plastoquinol + O2. Its function is as follows. Photosystem II (PSII) is a light-driven water:plastoquinone oxidoreductase that uses light energy to abstract electrons from H(2)O, generating O(2) and a proton gradient subsequently used for ATP formation. It consists of a core antenna complex that captures photons, and an electron transfer chain that converts photonic excitation into a charge separation. The D1/D2 (PsbA/PsbD) reaction center heterodimer binds P680, the primary electron donor of PSII as well as several subsequent electron acceptors. The sequence is that of Photosystem II protein D1 from Pyropia yezoensis (Susabi-nori).